The chain runs to 517 residues: Nicotine N-demethylase CYP82E4 (517 aa).

Residues 2-22 (LSPIEAIVGLVTFTFLFYFLW) form a helical membrane-spanning segment. A Glycyl lysine isopeptide (Lys-Gly) (interchain with G-Cter in ubiquitin) cross-link involves residue Lys254. Position 457 (Cys457) interacts with heme.

It belongs to the cytochrome P450 family. CYP82E2 subfamily. Heme is required as a cofactor. Expressed in leaves.

It localises to the membrane. It catalyses the reaction (S)-nicotine + reduced [NADPH--hemoprotein reductase] + O2 = (S)-nornicotine + formaldehyde + oxidized [NADPH--hemoprotein reductase] + H2O + H(+). It participates in alkaloid biosynthesis; nicotine biosynthesis. In terms of biological role, involved in the biosynthesis of pyridine alkaloid natural products, leading mainly to the production of anabasine, anatabine, nicotine and nornicotine, effective deterrents against herbivores with antiparasitic and pesticide properties (neurotoxins); nornicotine serves as the precursor in the synthesis of the carcinogen compound N'-nitrosonornicotine (NNN). Catalyzes the demethylation of nicotine to form nornicotine. The sequence is that of Nicotine N-demethylase CYP82E4 from Nicotiana tomentosiformis (Tobacco).